We begin with the raw amino-acid sequence, 268 residues long: MSLKVKDLCNIIEDFAPISLKEDFDNVGLMVGDREASVDAIMTALDCTMDVIDEAIEKNCNMIITHHPILFKKPSKITMDTLLGKKIIKIISNNINVYSAHTNLDSVKDGINDAVVNILGFDKSSILAKNNKAVKEAGIGRVVELEQNMTLKELCDRVKESFKIQSLRYCGDEDKKIHSFAVINGSGQDFFEEARKRGVDCIITGDTSYHYVSDYNEMNIAVIDAGHFGTEWPSVVVMSKKLEGALHKMGINTPILVSQNNIDPYKFK.

His66, His67, Asp105, His227, and Glu231 together coordinate a divalent metal cation.

It belongs to the GTP cyclohydrolase I type 2/NIF3 family. In terms of assembly, homohexamer.

This is GTP cyclohydrolase 1 type 2 homolog from Clostridium acetobutylicum (strain ATCC 824 / DSM 792 / JCM 1419 / IAM 19013 / LMG 5710 / NBRC 13948 / NRRL B-527 / VKM B-1787 / 2291 / W).